Reading from the N-terminus, the 103-residue chain is Large ribosomal subunit protein bL21 (103 aa).

It belongs to the bacterial ribosomal protein bL21 family. In terms of assembly, part of the 50S ribosomal subunit. Contacts protein L20.

In terms of biological role, this protein binds to 23S rRNA in the presence of protein L20. The chain is Large ribosomal subunit protein bL21 from Laribacter hongkongensis (strain HLHK9).